The sequence spans 706 residues: Protein MAM3 (706 aa).

At 1 to 16 (MSFLPLRSRSRSGAPH) the chain is on the vacuolar side. The chain crosses the membrane as a helical span at residues 17–37 (WVYIILYHIFTIPKIYSLPLL). The Cytoplasmic segment spans residues 38-65 (SGSHVLNSRDVADSGHSVGDEASVTTYY). The CNNM transmembrane domain maps to 57 to 240 (DEASVTTYYI…MGVERLTKDE (184 aa)). Residues 66 to 86 (IISIILVLLGGVFAGLTLGLM) form a helical membrane-spanning segment. At 87–120 (GQDEVYLKVISTSGSNSEKKLAKRVLDLISRGKH) the chain is on the vacuolar side. A helical membrane pass occupies residues 121–141 (WVLVTLLLSNVITNETLPIVL). Residues 142 to 145 (DRCL) lie on the Cytoplasmic side of the membrane. A helical transmembrane segment spans residues 146-166 (GGGWQAVVSSTILIVIFGEII). Over 167-177 (PQSVCVKYGLQ) the chain is Vacuolar. A helical transmembrane segment spans residues 178 to 198 (VGAFFCPFVLVLMYLMYPVAY). Over 199-706 (PIATLLDYML…ANGSSSTIKR (508 aa)) the chain is Cytoplasmic. 2 consecutive CBS domains span residues 259 to 320 (MTPI…DCLP) and 321 to 386 (ISHF…IVDE). 3 disordered regions span residues 421–495 (SHKE…ASNP), 515–540 (ITTHTPHSSKEPSPAPHSNDKSLSAE), and 557–597 (LHTQ…ENQN). Over residues 433 to 445 (ESSPLLSPSNSNH) the composition is skewed to low complexity. A phosphoserine mark is found at S439 and S447. Polar residues predominate over residues 472–495 (AVLSPTPQVTEHGTIIPSNLASNP). A Phosphoserine modification is found at S527. Positions 566 to 575 (TQVTTSTKTT) are enriched in low complexity. Over residues 576-597 (RNSPDSISIPNSGANHGNENQN) the composition is skewed to polar residues. Residue S603 is modified to Phosphoserine. Position 604 is a phosphotyrosine (Y604). T607 is modified (phosphothreonine). S614 carries the post-translational modification Phosphoserine. The tract at residues 626 to 706 (IGPAKDWDES…ANGSSSTIKR (81 aa)) is disordered. The span at 630-639 (KDWDESKSEY) shows a compositional bias: basic and acidic residues. A compositionally biased stretch (low complexity) spans 658 to 680 (SSSNASLFSSIKNKFKNENANNN). Residues 681–706 (DRSNFTDSLSRTSNYDANGSSSTIKR) show a composition bias toward polar residues.

This sequence belongs to the ACDP family.

The protein localises to the vacuole membrane. Functionally, involved in metal homeostasis and more specially in manganese sensitivity. The chain is Protein MAM3 (MAM3) from Saccharomyces cerevisiae (strain ATCC 204508 / S288c) (Baker's yeast).